Here is a 183-residue protein sequence, read N- to C-terminus: UPF0397 protein EAT1b_2102 (183 aa).

5 helical membrane-spanning segments follow: residues 9 to 29, 42 to 62, 74 to 94, 117 to 137, and 147 to 167; these read IVAT…AAIP, AFLA…IGLI, SPWW…GLIA, AVVQ…LIYA, and GAVA…LLLV.

It belongs to the UPF0397 family.

It localises to the cell membrane. This chain is UPF0397 protein EAT1b_2102, found in Exiguobacterium sp. (strain ATCC BAA-1283 / AT1b).